Here is a 292-residue protein sequence, read N- to C-terminus: 33 kDa chaperonin (292 aa).

2 disulfides stabilise this stretch: C230-C232 and C263-C266.

This sequence belongs to the HSP33 family. Post-translationally, under oxidizing conditions two disulfide bonds are formed involving the reactive cysteines. Under reducing conditions zinc is bound to the reactive cysteines and the protein is inactive.

The protein resides in the cytoplasm. In terms of biological role, redox regulated molecular chaperone. Protects both thermally unfolding and oxidatively damaged proteins from irreversible aggregation. Plays an important role in the bacterial defense system toward oxidative stress. The sequence is that of 33 kDa chaperonin from Shigella dysenteriae serotype 1 (strain Sd197).